The following is an 85-amino-acid chain: Large ribosomal subunit protein bL27 (85 aa).

The disordered stretch occupies residues 1-21; the sequence is MAHKKGVGSSRNGRDSDGQRL.

It belongs to the bacterial ribosomal protein bL27 family.

The chain is Large ribosomal subunit protein bL27 from Geobacter sp. (strain M21).